We begin with the raw amino-acid sequence, 109 residues long: Large ribosomal subunit protein eL42 (109 aa).

Residues 23–53 (VSQYKKSKESTHAQGRRRYDMKQSGFGGQTK) form a disordered region. Residues 28–43 (KSKESTHAQGRRRYDM) are compositionally biased toward basic and acidic residues.

This sequence belongs to the eukaryotic ribosomal protein eL42 family.

Its subcellular location is the cytoplasm. In Tetrahymena thermophila (strain SB210), this protein is Large ribosomal subunit protein eL42 (RPL36A).